The following is a 559-amino-acid chain: Estrogen receptor beta (559 aa).

Residues 1–155 (MAVACSPEKD…SSGGKADLHF (155 aa)) are modulating. A disordered region spans residues 128 to 148 (TSSKSARRRSQENEEGEVSSG). NR C4-type zinc fingers lie at residues 156-176 (CAVC…CEGC) and 192-216 (CPAT…LHKC). The nuclear receptor DNA-binding region spans 156 to 221 (CAVCHDYASG…RLHKCYNVGM (66 aa)). Residues 243-254 (RLSSQGRTSGPS) are compositionally biased toward polar residues. A disordered region spans residues 243 to 269 (RLSSQGRTSGPSVLNGPAVGPLNTPQP). The region spanning 273–509 (TSKQLIERIM…DLLLEMLDAH (237 aa)) is the NR LBD domain. Residues 514 to 559 (SRLPRRSPQQETVEQCDAPARPHSPGTSGPTNTWTPSCTGGRGEPQ) form a disordered region. A compositionally biased stretch (polar residues) spans 538 to 551 (PGTSGPTNTWTPSC).

Belongs to the nuclear hormone receptor family. NR3 subfamily. In terms of assembly, binds DNA as a homodimer. Can form a heterodimer with ER-alpha.

Its subcellular location is the nucleus. Binds estrogens with an affinity similar to that of ER-alpha, and activates expression of reporter genes containing estrogen response elements (ERE) in an estrogen-dependent manner. This is Estrogen receptor beta (esr2) from Sparus aurata (Gilthead sea bream).